The following is a 357-amino-acid chain: UDP-N-acetylglucosamine--N-acetylmuramyl-(pentapeptide) pyrophosphoryl-undecaprenol N-acetylglucosamine transferase (357 aa).

UDP-N-acetyl-alpha-D-glucosamine contacts are provided by residues Thr-13 to Gly-15, Asn-122, Arg-163, Ser-191, and Gln-288.

The protein belongs to the glycosyltransferase 28 family. MurG subfamily.

It localises to the cell inner membrane. The enzyme catalyses di-trans,octa-cis-undecaprenyl diphospho-N-acetyl-alpha-D-muramoyl-L-alanyl-D-glutamyl-meso-2,6-diaminopimeloyl-D-alanyl-D-alanine + UDP-N-acetyl-alpha-D-glucosamine = di-trans,octa-cis-undecaprenyl diphospho-[N-acetyl-alpha-D-glucosaminyl-(1-&gt;4)]-N-acetyl-alpha-D-muramoyl-L-alanyl-D-glutamyl-meso-2,6-diaminopimeloyl-D-alanyl-D-alanine + UDP + H(+). It functions in the pathway cell wall biogenesis; peptidoglycan biosynthesis. Cell wall formation. Catalyzes the transfer of a GlcNAc subunit on undecaprenyl-pyrophosphoryl-MurNAc-pentapeptide (lipid intermediate I) to form undecaprenyl-pyrophosphoryl-MurNAc-(pentapeptide)GlcNAc (lipid intermediate II). The polypeptide is UDP-N-acetylglucosamine--N-acetylmuramyl-(pentapeptide) pyrophosphoryl-undecaprenol N-acetylglucosamine transferase (Gloeobacter violaceus (strain ATCC 29082 / PCC 7421)).